A 320-amino-acid polypeptide reads, in one-letter code: MLYQLLHTVLSVVGVSLNAFMMYLALTKSPKIMLPCSAIITIKTFTDILTSAMSFFVMQRIVTDGSSILVIPTGPCTHLGPTACYIGHMFMLCFLECNLIWMISSYIFRYYILYVRDPSIKSLVFVAICLSIPSFIHMATWISNYDPTVAIAIPENVGIESRDMVLGGTIVTWSALTLIIQLFITSILVLIAYAWIRNTLLSFAVKMGSDKNDVKKLNTRLVKVINFQVFLPSFIFLGVFVFVGMFTQLIDPKISQYLVSVIFMFSPICSPFSYILFVPHYLNVILGNKKVSEAKSTTEGCTFRHVNMAASTSNTPECSA.

Helical transmembrane passes span 5–25 (LLHT…MYLA), 38–58 (AIIT…FFVM), 83–103 (ACYI…IWMI), 122–142 (SLVF…ATWI), 176–196 (LTLI…YAWI), 230–250 (FLPS…TQLI), and 258–278 (LVSV…ILFV).

The protein belongs to the nematode receptor-like protein srd family.

The protein resides in the membrane. This is Serpentine receptor class delta-28 (srd-28) from Caenorhabditis elegans.